The primary structure comprises 250 residues: UPF0494 membrane protein PB2B2.07c (250 aa).

Helical transmembrane passes span 98–118, 144–164, and 179–199; these read WPLL…NFEV, IAIY…MFPL, and MIIA…GATI.

The protein belongs to the UPF0494 family.

The protein localises to the cytoplasm. The protein resides in the endoplasmic reticulum. It is found in the golgi apparatus. It localises to the membrane. This is UPF0494 membrane protein PB2B2.07c from Schizosaccharomyces pombe (strain 972 / ATCC 24843) (Fission yeast).